Here is a 337-residue protein sequence, read N- to C-terminus: DNA replication regulator sld2 (337 aa).

Phosphothreonine; by cdc2 is present on residues T60 and T74. Residues 71-97 (KFQTPTKQRAETEANESPKAPRNDYLQ) are disordered. S87 is modified (phosphoserine; by cdc2). Phosphothreonine; by cdc2 is present on residues T99 and T154. S183 is subject to Phosphoserine. The disordered stretch occupies residues 258–302 (SMNLSKSHLEGLPEIDEDAENGIDDNEDTTASKDSSPFLDLQSER). The segment covering 270 to 285 (PEIDEDAENGIDDNED) has biased composition (acidic residues).

This sequence belongs to the SLD2 family. In terms of assembly, interacts with rad4. In terms of processing, phosphorylated by cdc2 at the onset of S-phase.

The protein localises to the cytoplasm. It is found in the nucleus. Functionally, has a role in the initiation of DNA replication. Required at S-phase checkpoint. In Schizosaccharomyces pombe (strain 972 / ATCC 24843) (Fission yeast), this protein is DNA replication regulator sld2 (drc1).